Here is a 245-residue protein sequence, read N- to C-terminus: 2,3-bisphosphoglycerate-dependent phosphoglycerate mutase (245 aa).

Residues 8–15 (RHGQSLWN), 21–22 (TG), Arg-60, 87–90 (ERHY), Lys-98, 114–115 (RR), and 183–184 (GN) contribute to the substrate site. The Tele-phosphohistidine intermediate role is filled by His-9. Residue Glu-87 is the Proton donor/acceptor of the active site.

Belongs to the phosphoglycerate mutase family. BPG-dependent PGAM subfamily.

The catalysed reaction is (2R)-2-phosphoglycerate = (2R)-3-phosphoglycerate. It functions in the pathway carbohydrate degradation; glycolysis; pyruvate from D-glyceraldehyde 3-phosphate: step 3/5. Its function is as follows. Catalyzes the interconversion of 2-phosphoglycerate and 3-phosphoglycerate. In Bacillus anthracis (strain A0248), this protein is 2,3-bisphosphoglycerate-dependent phosphoglycerate mutase.